A 372-amino-acid chain; its full sequence is Chemerin-like receptor 1 (372 aa).

Residues 1–39 are Extracellular-facing; that stretch reads MEYEGYNDSSIYGEEYSDGSDYIVDLEEAGPLEAKVAEV. N-linked (GlcNAc...) asparagine glycosylation occurs at Asn7. Residues 40-62 traverse the membrane as a helical segment; sequence FLVVIYSLVCFLGILGNGLVIVI. The Cytoplasmic portion of the chain corresponds to 63 to 73; it reads ATFKMKKTVNT. A helical membrane pass occupies residues 74 to 95; sequence VWFVNLAVADFLFNIFLPIHIT. At 96–112 the chain is on the extracellular side; it reads YAAMDYHWVFGKAMCKI. Cysteines 110 and 188 form a disulfide. Residues 113 to 133 traverse the membrane as a helical segment; that stretch reads SSFLLSHNMYTSVFLLTVISF. Residues 134–152 are Cytoplasmic-facing; the sequence is DRCISVLLPVWSQNHRSVR. Residues 153-174 traverse the membrane as a helical segment; that stretch reads LAYMTCVVVWVLAFFLSSPSLV. Over 175-223 the chain is Extracellular; it reads FRDTVSTSHGKITCFNNFSLAAPEPFSHSTHPRTDPVGYSRHVAVTVTR. Asn191 carries N-linked (GlcNAc...) asparagine glycosylation. A helical transmembrane segment spans residues 224–244; sequence FLCGFLIPVFIITACYLTIVF. At 245 to 260 the chain is on the cytoplasmic side; the sequence is KLQRNRLAKTKKPFKI. The helical transmembrane segment at 261–281 threads the bilayer; the sequence is IITIIITFFLCWCPYHTLYLL. The Extracellular segment spans residues 282-299; sequence ELHHTAVPASVFSLGLPL. Residues 300-319 traverse the membrane as a helical segment; that stretch reads ATAVAIANSCMNPILYVFMG. Topologically, residues 320–372 are cytoplasmic; the sequence is HDFKKFKVALFSRLVNALSEDTGPSSYPSHRSFTKMSSLIEKASVNEKETSTL. Ser338 carries the post-translational modification Phosphoserine. Thr341 carries the post-translational modification Phosphothreonine. Phosphoserine occurs at positions 348, 351, and 357. A Phosphothreonine modification is found at Thr371.

The protein belongs to the chemokine-like receptor (CMKLR) family. In terms of tissue distribution, high expression in heart and lung, low in small intestines, colon, kidney, liver, uterus and brain.

It localises to the cell membrane. Receptor for the chemoattractant adipokine chemerin/RARRES2 and for the omega-3 fatty acid derived molecule resolvin E1. Interaction with RARRES2 initiates activation of G proteins G(i)/G(o) and beta-arrestin pathways inducing cellular responses via second messenger pathways such as intracellular calcium mobilization, phosphorylation of MAP kinases MAPK1/MAPK3 (ERK1/2), TYRO3, MAPK14/P38MAPK and PI3K leading to multifunctional effects, like, reduction of immune responses, enhancing of adipogenesis and angionesis. Resolvin E1 down-regulates cytokine production in macrophages by reducing the activation of MAPK1/3 (ERK1/2) and NF-kappa-B. Positively regulates adipogenesis and adipocyte metabolism. This Rattus norvegicus (Rat) protein is Chemerin-like receptor 1 (Cmklr1).